The following is a 166-amino-acid chain: Large ribosomal subunit protein uL10 (166 aa).

It belongs to the universal ribosomal protein uL10 family. As to quaternary structure, part of the ribosomal stalk of the 50S ribosomal subunit. The N-terminus interacts with L11 and the large rRNA to form the base of the stalk. The C-terminus forms an elongated spine to which L12 dimers bind in a sequential fashion forming a multimeric L10(L12)X complex.

In terms of biological role, forms part of the ribosomal stalk, playing a central role in the interaction of the ribosome with GTP-bound translation factors. This chain is Large ribosomal subunit protein uL10, found in Aeromonas hydrophila subsp. hydrophila (strain ATCC 7966 / DSM 30187 / BCRC 13018 / CCUG 14551 / JCM 1027 / KCTC 2358 / NCIMB 9240 / NCTC 8049).